The sequence spans 170 residues: Peptide deformylase (170 aa).

Residues C94 and H136 each coordinate Fe cation. Residue E137 is part of the active site. H140 contributes to the Fe cation binding site.

This sequence belongs to the polypeptide deformylase family. It depends on Fe(2+) as a cofactor.

The enzyme catalyses N-terminal N-formyl-L-methionyl-[peptide] + H2O = N-terminal L-methionyl-[peptide] + formate. Removes the formyl group from the N-terminal Met of newly synthesized proteins. Requires at least a dipeptide for an efficient rate of reaction. N-terminal L-methionine is a prerequisite for activity but the enzyme has broad specificity at other positions. This is Peptide deformylase from Wolinella succinogenes (strain ATCC 29543 / DSM 1740 / CCUG 13145 / JCM 31913 / LMG 7466 / NCTC 11488 / FDC 602W) (Vibrio succinogenes).